A 127-amino-acid chain; its full sequence is Small ribosomal subunit protein uS11 (127 aa).

This sequence belongs to the universal ribosomal protein uS11 family. In terms of assembly, part of the 30S ribosomal subunit. Interacts with proteins S7 and S18. Binds to IF-3.

Located on the platform of the 30S subunit, it bridges several disparate RNA helices of the 16S rRNA. Forms part of the Shine-Dalgarno cleft in the 70S ribosome. This Anaeromyxobacter sp. (strain Fw109-5) protein is Small ribosomal subunit protein uS11.